The primary structure comprises 557 residues: Formate--tetrahydrofolate ligase 2 (557 aa).

ATP is bound at residue 66–73; the sequence is TPAGEGKT.

The protein belongs to the formate--tetrahydrofolate ligase family.

The enzyme catalyses (6S)-5,6,7,8-tetrahydrofolate + formate + ATP = (6R)-10-formyltetrahydrofolate + ADP + phosphate. It participates in one-carbon metabolism; tetrahydrofolate interconversion. This chain is Formate--tetrahydrofolate ligase 2, found in Streptococcus pyogenes serotype M18 (strain MGAS8232).